We begin with the raw amino-acid sequence, 358 residues long: Peptide chain release factor 1 (358 aa).

Glutamine 235 is subject to N5-methylglutamine.

This sequence belongs to the prokaryotic/mitochondrial release factor family. Post-translationally, methylated by PrmC. Methylation increases the termination efficiency of RF1.

The protein resides in the cytoplasm. In terms of biological role, peptide chain release factor 1 directs the termination of translation in response to the peptide chain termination codons UAG and UAA. The polypeptide is Peptide chain release factor 1 (Neisseria meningitidis serogroup C (strain 053442)).